Consider the following 326-residue polypeptide: Glycerol-3-phosphate dehydrogenase [NAD(P)+] (326 aa).

Trp-15, Arg-35, and Lys-107 together coordinate NADPH. Sn-glycerol 3-phosphate is bound by residues Lys-107, Gly-135, and Ser-137. Position 139 (Ala-139) interacts with NADPH. Sn-glycerol 3-phosphate-binding residues include Lys-190, Asp-243, Ser-253, Arg-254, and Asn-255. Lys-190 serves as the catalytic Proton acceptor. Arg-254 is an NADPH binding site. 2 residues coordinate NADPH: Leu-273 and Glu-275.

The protein belongs to the NAD-dependent glycerol-3-phosphate dehydrogenase family.

The protein resides in the cytoplasm. It carries out the reaction sn-glycerol 3-phosphate + NAD(+) = dihydroxyacetone phosphate + NADH + H(+). The catalysed reaction is sn-glycerol 3-phosphate + NADP(+) = dihydroxyacetone phosphate + NADPH + H(+). Its pathway is membrane lipid metabolism; glycerophospholipid metabolism. Catalyzes the reduction of the glycolytic intermediate dihydroxyacetone phosphate (DHAP) to sn-glycerol 3-phosphate (G3P), the key precursor for phospholipid synthesis. This chain is Glycerol-3-phosphate dehydrogenase [NAD(P)+], found in Bradyrhizobium diazoefficiens (strain JCM 10833 / BCRC 13528 / IAM 13628 / NBRC 14792 / USDA 110).